An 831-amino-acid polypeptide reads, in one-letter code: Periplasmic nitrate reductase (831 aa).

Positions 1 to 38 form a signal peptide, tat-type signal; the sequence is MSMARRDFIKQTAAAAAATVAGVPLTGYTQNIVTESEA. A 4Fe-4S Mo/W bis-MGD-type domain is found at 41-97; that stretch reads LKWSKAPCRFCGTGCGVNVAVKDNQVVATHGDFNAEVNKGLNCVKGYFLSKIMYGSD. [4Fe-4S] cluster is bound by residues cysteine 48, cysteine 51, cysteine 55, and cysteine 83. Residues lysine 85, glutamine 152, asparagine 177, cysteine 181, 214 to 221, 245 to 249, 264 to 266, methionine 375, glutamine 379, asparagine 485, 511 to 512, lysine 534, aspartate 561, and 721 to 730 each bind Mo-bis(molybdopterin guanine dinucleotide); these read WGSNMAEM, STFEH, QSD, SD, and TGRVLEHWHS. Tryptophan 797 is a binding site for substrate. Mo-bis(molybdopterin guanine dinucleotide)-binding residues include asparagine 805 and lysine 822.

This sequence belongs to the prokaryotic molybdopterin-containing oxidoreductase family. NasA/NapA/NarB subfamily. In terms of assembly, component of the periplasmic nitrate reductase NapAB complex composed of NapA and NapB. It depends on [4Fe-4S] cluster as a cofactor. Requires Mo-bis(molybdopterin guanine dinucleotide) as cofactor. Predicted to be exported by the Tat system. The position of the signal peptide cleavage has not been experimentally proven.

The protein localises to the periplasm. The catalysed reaction is 2 Fe(II)-[cytochrome] + nitrate + 2 H(+) = 2 Fe(III)-[cytochrome] + nitrite + H2O. Catalytic subunit of the periplasmic nitrate reductase complex NapAB. Receives electrons from NapB and catalyzes the reduction of nitrate to nitrite. The sequence is that of Periplasmic nitrate reductase from Bordetella parapertussis (strain 12822 / ATCC BAA-587 / NCTC 13253).